Reading from the N-terminus, the 496-residue chain is Glutamate--tRNA ligase (496 aa).

The 'HIGH' region signature appears at 12 to 22; sequence PSPTGTPHVGL. The short motif at 256–260 is the 'KMSKS' region element; the sequence is KLSKR. K259 contacts ATP.

It belongs to the class-I aminoacyl-tRNA synthetase family. Glutamate--tRNA ligase type 1 subfamily. Monomer.

It localises to the cytoplasm. It carries out the reaction tRNA(Glu) + L-glutamate + ATP = L-glutamyl-tRNA(Glu) + AMP + diphosphate. Its function is as follows. Catalyzes the attachment of glutamate to tRNA(Glu) in a two-step reaction: glutamate is first activated by ATP to form Glu-AMP and then transferred to the acceptor end of tRNA(Glu). The protein is Glutamate--tRNA ligase of Mycobacteroides abscessus (strain ATCC 19977 / DSM 44196 / CCUG 20993 / CIP 104536 / JCM 13569 / NCTC 13031 / TMC 1543 / L948) (Mycobacterium abscessus).